The primary structure comprises 339 residues: Cathepsin L (339 aa).

The N-terminal stretch at 1–17 is a signal peptide; the sequence is MRTVLVALLALVALTQA. A propeptide spans 18–121 (activation peptide); the sequence is ISPLDLIKEE…ATYIPPAHVT (104 aa). Residue Asn96 is glycosylated (N-linked (GlcNAc...) asparagine). Intrachain disulfides connect Cys143–Cys186, Cys177–Cys219, and Cys278–Cys328. Cys146 is an active-site residue. His285 is a catalytic residue. The propeptide occupies 295 to 298; that stretch reads DESG. Asn306 is a catalytic residue.

This sequence belongs to the peptidase C1 family. Dimer of a heavy and a light chain linked by disulfide bonds.

Its subcellular location is the lysosome. It carries out the reaction Specificity close to that of papain. As compared to cathepsin B, cathepsin L exhibits higher activity toward protein substrates, but has little activity on Z-Arg-Arg-NHMec, and no peptidyl-dipeptidase activity.. Important for the overall degradation of proteins in lysosomes. Required for differentiation of imaginal disks. This chain is Cathepsin L, found in Sarcophaga peregrina (Flesh fly).